A 330-amino-acid polypeptide reads, in one-letter code: MEEVEAANKAAVESCHGVLNLLSQQTNDSKSIMVETREAVCKFKRVSSLLSRGLGQRKIKKLNNNNYKFSSSLLPQHMFLESPVCSNNAISGCIPILAPKPLQIVPAGPPPLMLFNQNMCLDKSFLELKPPSSRAVDPKPYQFIHTHQQGVYSRSKSGLNLKFDGSIGASCYSPSISNGSRSFVSSLSMDGSVTDYDRNSFHLIGLPQGSDHISQHSRRTSCSGSLKCGSKSKCHCSKKRKLRVKRSIKVPAISNKIADIPPDEYSWRKYGQKPIKGSPHPRGYYKCSSVRGCPARKHVERCVEETSMLIVTYEGEHNHSRILSSQSAHT.

A DNA-binding region (WRKY) is located at residues 256-322 (KIADIPPDEY…YEGEHNHSRI (67 aa)).

Its subcellular location is the nucleus. In terms of biological role, transcription factor. Interacts specifically with the W box (5'-(T)TGAC[CT]-3'), a frequently occurring elicitor-responsive cis-acting element. The sequence is that of Probable WRKY transcription factor 74 (WRKY74) from Arabidopsis thaliana (Mouse-ear cress).